The following is a 140-amino-acid chain: Nucleoside diphosphate kinase (140 aa).

ATP is bound by residues Lys-11, Phe-59, Arg-87, Thr-93, Arg-104, and Asn-114. His-117 (pros-phosphohistidine intermediate) is an active-site residue.

Belongs to the NDK family. Homotetramer. The cofactor is Mg(2+).

The protein localises to the cytoplasm. The enzyme catalyses a 2'-deoxyribonucleoside 5'-diphosphate + ATP = a 2'-deoxyribonucleoside 5'-triphosphate + ADP. The catalysed reaction is a ribonucleoside 5'-diphosphate + ATP = a ribonucleoside 5'-triphosphate + ADP. In terms of biological role, major role in the synthesis of nucleoside triphosphates other than ATP. The ATP gamma phosphate is transferred to the NDP beta phosphate via a ping-pong mechanism, using a phosphorylated active-site intermediate. This Rhodospirillum centenum (strain ATCC 51521 / SW) protein is Nucleoside diphosphate kinase.